A 174-amino-acid polypeptide reads, in one-letter code: Transcription factor bHLH168 (174 aa).

The bHLH domain maps to serine 14–leucine 63.

It belongs to the bHLH protein family.

The protein resides in the nucleus. This chain is Transcription factor bHLH168, found in Arabidopsis thaliana (Mouse-ear cress).